The sequence spans 219 residues: Imidazole glycerol phosphate synthase subunit HisH (219 aa).

Residues 4 to 216 (TVTVLDYGSG…VDSLPATGRN (213 aa)) enclose the Glutamine amidotransferase type-1 domain. Cys-82 functions as the Nucleophile in the catalytic mechanism. Catalysis depends on residues His-191 and Glu-193.

As to quaternary structure, heterodimer of HisH and HisF.

The protein localises to the cytoplasm. The enzyme catalyses 5-[(5-phospho-1-deoxy-D-ribulos-1-ylimino)methylamino]-1-(5-phospho-beta-D-ribosyl)imidazole-4-carboxamide + L-glutamine = D-erythro-1-(imidazol-4-yl)glycerol 3-phosphate + 5-amino-1-(5-phospho-beta-D-ribosyl)imidazole-4-carboxamide + L-glutamate + H(+). It catalyses the reaction L-glutamine + H2O = L-glutamate + NH4(+). It functions in the pathway amino-acid biosynthesis; L-histidine biosynthesis; L-histidine from 5-phospho-alpha-D-ribose 1-diphosphate: step 5/9. IGPS catalyzes the conversion of PRFAR and glutamine to IGP, AICAR and glutamate. The HisH subunit catalyzes the hydrolysis of glutamine to glutamate and ammonia as part of the synthesis of IGP and AICAR. The resulting ammonia molecule is channeled to the active site of HisF. The chain is Imidazole glycerol phosphate synthase subunit HisH from Renibacterium salmoninarum (strain ATCC 33209 / DSM 20767 / JCM 11484 / NBRC 15589 / NCIMB 2235).